The sequence spans 591 residues: Asparagine synthetase [glutamine-hydrolyzing] 2 (591 aa).

The For GATase activity role is filled by Cys-2. The Glutamine amidotransferase type-2 domain occupies 2–185; it reads CGILAVLGVA…PGHLYSSKTG (184 aa). L-glutamine contacts are provided by residues 50–54, 75–77, and Asp-98; these read RLAIV and NGE. Positions 193–516 constitute an Asparagine synthetase domain; the sequence is PPWFSESIPS…PKNAARLTVP (324 aa). ATP-binding positions include Leu-231, Ile-267, and 341-342; that span reads SG.

Expressed in companion cells of leaf sheath vascular bundles, and phloem-parenchyma cells, nucellar projections and nucellar epidermis of dorsal vascular bundles of grains.

The enzyme catalyses L-aspartate + L-glutamine + ATP + H2O = L-asparagine + L-glutamate + AMP + diphosphate + H(+). Its pathway is amino-acid biosynthesis; L-asparagine biosynthesis; L-asparagine from L-aspartate (L-Gln route): step 1/1. Essential for nitrogen assimilation, distribution and remobilization within the plant via the phloem. This is Asparagine synthetase [glutamine-hydrolyzing] 2 from Oryza sativa subsp. japonica (Rice).